We begin with the raw amino-acid sequence, 378 residues long: Chaperone protein DnaJ (378 aa).

The J domain maps to 5-70; the sequence is DYYEVLGVAK…QKRAAYDQYG (66 aa). Residues 138 to 216 form a CR-type zinc finger; sequence GYDTQIRVPS…CHGSGKVKET (79 aa). Residues Cys-151, Cys-154, Cys-168, Cys-171, Cys-190, Cys-193, Cys-204, and Cys-207 each coordinate Zn(2+). CXXCXGXG motif repeat units follow at residues 151-158, 168-175, 190-197, and 204-211; these read CEVCHGSG, CPTCHGQG, CPKCHGTG, and CAHCHGSG.

It belongs to the DnaJ family. Homodimer. Zn(2+) is required as a cofactor.

Its subcellular location is the cytoplasm. Participates actively in the response to hyperosmotic and heat shock by preventing the aggregation of stress-denatured proteins and by disaggregating proteins, also in an autonomous, DnaK-independent fashion. Unfolded proteins bind initially to DnaJ; upon interaction with the DnaJ-bound protein, DnaK hydrolyzes its bound ATP, resulting in the formation of a stable complex. GrpE releases ADP from DnaK; ATP binding to DnaK triggers the release of the substrate protein, thus completing the reaction cycle. Several rounds of ATP-dependent interactions between DnaJ, DnaK and GrpE are required for fully efficient folding. Also involved, together with DnaK and GrpE, in the DNA replication of plasmids through activation of initiation proteins. The sequence is that of Chaperone protein DnaJ from Burkholderia vietnamiensis (strain G4 / LMG 22486) (Burkholderia cepacia (strain R1808)).